The chain runs to 276 residues: Formamidopyrimidine-DNA glycosylase (276 aa).

The active-site Schiff-base intermediate with DNA is the Pro2. Catalysis depends on Glu3, which acts as the Proton donor. Catalysis depends on Lys58, which acts as the Proton donor; for beta-elimination activity. DNA contacts are provided by His92, Arg111, and Lys154. An FPG-type zinc finger spans residues 239 to 273; that stretch reads QVYGHAGEECSSCGTILEKIKVNGRGTTFCPHCQV. Arg263 acts as the Proton donor; for delta-elimination activity in catalysis.

Belongs to the FPG family. Monomer. Zn(2+) is required as a cofactor.

It catalyses the reaction Hydrolysis of DNA containing ring-opened 7-methylguanine residues, releasing 2,6-diamino-4-hydroxy-5-(N-methyl)formamidopyrimidine.. It carries out the reaction 2'-deoxyribonucleotide-(2'-deoxyribose 5'-phosphate)-2'-deoxyribonucleotide-DNA = a 3'-end 2'-deoxyribonucleotide-(2,3-dehydro-2,3-deoxyribose 5'-phosphate)-DNA + a 5'-end 5'-phospho-2'-deoxyribonucleoside-DNA + H(+). In terms of biological role, involved in base excision repair of DNA damaged by oxidation or by mutagenic agents. Acts as a DNA glycosylase that recognizes and removes damaged bases. Has a preference for oxidized purines, such as 7,8-dihydro-8-oxoguanine (8-oxoG). Has AP (apurinic/apyrimidinic) lyase activity and introduces nicks in the DNA strand. Cleaves the DNA backbone by beta-delta elimination to generate a single-strand break at the site of the removed base with both 3'- and 5'-phosphates. The sequence is that of Formamidopyrimidine-DNA glycosylase from Lactobacillus gasseri (strain ATCC 33323 / DSM 20243 / BCRC 14619 / CIP 102991 / JCM 1131 / KCTC 3163 / NCIMB 11718 / NCTC 13722 / AM63).